The following is a 214-amino-acid chain: Small ribosomal subunit protein uS5 (214 aa).

The 64-residue stretch at Leu54–Val117 folds into the S5 DRBM domain.

This sequence belongs to the universal ribosomal protein uS5 family. Part of the 30S ribosomal subunit. Contacts protein S4.

Functionally, with S4 and S12 plays an important role in translational accuracy. The chain is Small ribosomal subunit protein uS5 from Saccharolobus islandicus (strain Y.N.15.51 / Yellowstone #2) (Sulfolobus islandicus).